The sequence spans 591 residues: Cineole synthase 1, chloroplastic (591 aa).

Residues 1–44 constitute a chloroplast transit peptide; it reads MSSLIMQVVIPKPAKFFHNNLFSLSSKRHRFSTTTTTRGGRWAR. (2E)-geranyl diphosphate-binding residues include Arg308, Asp345, Asp349, Arg486, and Asp489. Positions 345 and 349 each coordinate Mg(2+). The DDXXD motif signature appears at 345–349; the sequence is DDVFD. Mg(2+) is bound by residues Asp489, Thr493, and Glu497.

The protein belongs to the terpene synthase family. Tpsb subfamily. Monomer. Requires Mg(2+) as cofactor. Mn(2+) is required as a cofactor.

The protein localises to the plastid. Its subcellular location is the chloroplast. It carries out the reaction (2E)-geranyl diphosphate + H2O = 1,8-cineole + diphosphate. It catalyses the reaction (2E)-geranyl diphosphate = alpha-pinene + diphosphate. The enzyme catalyses (2E)-geranyl diphosphate = beta-pinene + diphosphate. The catalysed reaction is (2E)-geranyl diphosphate + H2O = (S)-alpha-terpineol + diphosphate. It carries out the reaction (2E)-geranyl diphosphate = beta-myrcene + diphosphate. It catalyses the reaction (2E)-geranyl diphosphate = sabinene + diphosphate. Its pathway is secondary metabolite biosynthesis; terpenoid biosynthesis. Monoterpene synthase (TPS) involved in the biosynthesis of monoterpene natural products, components of the chemical defense arsenal. Catalyzes the conversion of (2E)-geranyl diphosphate (GPP) into 1,8-cineole, and, as minor products, alpha-terpineol, beta-pinene, alpha-pinene, sabinene and myrcene. The chain is Cineole synthase 1, chloroplastic from Salvia fruticosa (Greek sage).